Consider the following 223-residue polypeptide: Chalcone--flavanone isomerase (223 aa).

Residues T50, N114, and T191 each contribute to the substrate site.

It belongs to the chalcone isomerase family.

The enzyme catalyses a chalcone = a flavanone.. Its pathway is secondary metabolite biosynthesis; flavonoid biosynthesis. In terms of biological role, catalyzes the intramolecular cyclization of bicyclic chalcones into tricyclic (S)-flavanones. Responsible for the isomerization of 4,2',4',6'-tetrahydroxychalcone (also termed chalcone) into naringenin. This Pisum sativum (Garden pea) protein is Chalcone--flavanone isomerase (CHI).